We begin with the raw amino-acid sequence, 577 residues long: External alternative NAD(P)H-ubiquinone oxidoreductase B1, mitochondrial (577 aa).

Residues 1-35 (MRGFTYLSKVLHSHSSYSKLLVLCSVSTGGLLVYA) constitute a mitochondrion transit peptide. An FAD-binding site is contributed by 57–87 (RVVVLGTGWGGTSFLKDVDISSYDVQVVSPR). Residue 221–257 (LHFVIVGGGPTGVEFAAELHDYVYEDLVKIYPSVKDF) participates in NAD(+) binding. Positions 378 to 413 (KVMEDISAIFKAADKDDSGTLSIEEFRDVLEDIIIR) constitute an EF-hand domain. Residues Asp391, Asp393, Ser395, Thr397, and Glu402 each contribute to the Ca(2+) site. The Microbody targeting signal signature appears at 568-577 (YIFGRDSSRI).

It belongs to the NADH dehydrogenase family. Requires FAD as cofactor.

Its subcellular location is the mitochondrion inner membrane. It is found in the peroxisome. It catalyses the reaction a quinone + NADH + H(+) = a quinol + NAD(+). The enzyme catalyses a ubiquinone + NADH + H(+) = a ubiquinol + NAD(+). Activity is calcium-dependent with a more pronounced effect at higher pH. Its function is as follows. Alternative NADH-ubiquinone oxidoreductase which catalyzes the oxidation of mitochondrial NADH does not translocate protons across the inner mitochondrial membrane. Calcium-dependent NAD(P)H dehydrogenase. Binds calcium ions. This is External alternative NAD(P)H-ubiquinone oxidoreductase B1, mitochondrial (NDB1) from Solanum tuberosum (Potato).